Consider the following 421-residue polypeptide: Synaptotagmin-12 (421 aa).

Residues 1–18 are Vesicular-facing; that stretch reads MAVDVTEYHLSVIKSPPG. The helical transmembrane segment at 19-39 threads the bilayer; the sequence is WEVGVYAAGALALLGIAAVSL. At 40 to 421 the chain is on the cytoplasmic side; the sequence is WKLWTSGSFP…VSMWHPVRRN (382 aa). Ser-97 bears the Phosphoserine; by PKA mark. Phosphoserine is present on residues Ser-99 and Ser-214. C2 domains lie at 152–272 and 283–416; these read TLGQ…SGWL and AVGE…SMWH.

Belongs to the synaptotagmin family. Homodimer. Can also form heterodimers. Interacts with SYT1. Phosphorylation of Ser-97 is required for mossy-fiber long-term potentiation. As to expression, expressed in the brain, specifically by neurons in the hippocampus, and in the adrenal medulla (at protein level).

The protein localises to the cytoplasmic vesicle. It localises to the secretory vesicle. Its subcellular location is the synaptic vesicle membrane. Its function is as follows. Synaptic vesicle phosphoprotein that enhances spontaneous neurotransmitter release but does not effect induced neurotransmitter release. Unlike other synaptotagmins, it does not bind Ca(2+) or phospholipids. Essential for mossy-fiber long-term potentiation in the hippocampus. The polypeptide is Synaptotagmin-12 (Mus musculus (Mouse)).